We begin with the raw amino-acid sequence, 388 residues long: 1-deoxy-D-xylulose 5-phosphate reductoisomerase (388 aa).

Residues Thr10, Gly11, Thr12, Ile13, Arg37, Gln38, and Asn122 each contribute to the NADPH site. Lys123 provides a ligand contact to 1-deoxy-D-xylulose 5-phosphate. Residue Glu124 participates in NADPH binding. Asp148 provides a ligand contact to Mn(2+). 1-deoxy-D-xylulose 5-phosphate contacts are provided by Ser149, Glu150, Ser179, and His202. Residue Glu150 coordinates Mn(2+). NADPH is bound at residue Gly208. Residues Ser215, Asn220, Lys221, and Glu224 each contribute to the 1-deoxy-D-xylulose 5-phosphate site. Mn(2+) is bound at residue Glu224.

Belongs to the DXR family. Mg(2+) serves as cofactor. It depends on Mn(2+) as a cofactor.

The enzyme catalyses 2-C-methyl-D-erythritol 4-phosphate + NADP(+) = 1-deoxy-D-xylulose 5-phosphate + NADPH + H(+). It functions in the pathway isoprenoid biosynthesis; isopentenyl diphosphate biosynthesis via DXP pathway; isopentenyl diphosphate from 1-deoxy-D-xylulose 5-phosphate: step 1/6. Catalyzes the NADPH-dependent rearrangement and reduction of 1-deoxy-D-xylulose-5-phosphate (DXP) to 2-C-methyl-D-erythritol 4-phosphate (MEP). The sequence is that of 1-deoxy-D-xylulose 5-phosphate reductoisomerase from Laribacter hongkongensis (strain HLHK9).